Reading from the N-terminus, the 146-residue chain is Ribosomal RNA large subunit methyltransferase H (146 aa).

Residues Leu60, Gly93, and 112 to 117 contribute to the S-adenosyl-L-methionine site; that span reads MGKMTL.

Belongs to the RNA methyltransferase RlmH family. As to quaternary structure, homodimer.

The protein localises to the cytoplasm. It catalyses the reaction pseudouridine(1915) in 23S rRNA + S-adenosyl-L-methionine = N(3)-methylpseudouridine(1915) in 23S rRNA + S-adenosyl-L-homocysteine + H(+). Specifically methylates the pseudouridine at position 1915 (m3Psi1915) in 23S rRNA. This chain is Ribosomal RNA large subunit methyltransferase H, found in Koribacter versatilis (strain Ellin345).